A 353-amino-acid chain; its full sequence is Glutamate 5-kinase (353 aa).

An ATP-binding site is contributed by Lys-8. Substrate is bound by residues Ser-47, Asp-134, and Asn-146. 198–204 serves as a coordination point for ATP; sequence TGGIRSK. The 78-residue stretch at 262-339 folds into the PUA domain; the sequence is AGKIYVNKGA…SDLKKILGYE (78 aa).

Belongs to the glutamate 5-kinase family.

Its subcellular location is the cytoplasm. It catalyses the reaction L-glutamate + ATP = L-glutamyl 5-phosphate + ADP. It participates in amino-acid biosynthesis; L-proline biosynthesis; L-glutamate 5-semialdehyde from L-glutamate: step 1/2. Functionally, catalyzes the transfer of a phosphate group to glutamate to form L-glutamate 5-phosphate. The polypeptide is Glutamate 5-kinase (Thermotoga maritima (strain ATCC 43589 / DSM 3109 / JCM 10099 / NBRC 100826 / MSB8)).